We begin with the raw amino-acid sequence, 139 residues long: ATP synthase epsilon chain (139 aa).

It belongs to the ATPase epsilon chain family. In terms of assembly, F-type ATPases have 2 components, CF(1) - the catalytic core - and CF(0) - the membrane proton channel. CF(1) has five subunits: alpha(3), beta(3), gamma(1), delta(1), epsilon(1). CF(0) has three main subunits: a, b and c.

It localises to the cell inner membrane. Its function is as follows. Produces ATP from ADP in the presence of a proton gradient across the membrane. This chain is ATP synthase epsilon chain, found in Haemophilus ducreyi (strain 35000HP / ATCC 700724).